The chain runs to 426 residues: D-tagatose-1,6-bisphosphate aldolase subunit KbaZ (426 aa).

The protein belongs to the GatZ/KbaZ family. KbaZ subfamily. In terms of assembly, forms a complex with KbaY.

The protein operates within carbohydrate metabolism; D-tagatose 6-phosphate degradation; D-glyceraldehyde 3-phosphate and glycerone phosphate from D-tagatose 6-phosphate: step 2/2. Its function is as follows. Component of the tagatose-1,6-bisphosphate aldolase KbaYZ that is required for full activity and stability of the Y subunit. Could have a chaperone-like function for the proper and stable folding of KbaY. When expressed alone, KbaZ does not show any aldolase activity. In Escherichia coli O81 (strain ED1a), this protein is D-tagatose-1,6-bisphosphate aldolase subunit KbaZ.